Here is a 445-residue protein sequence, read N- to C-terminus: Probable D-serine dehydratase (445 aa).

Residue Lys-119 is modified to N6-(pyridoxal phosphate)lysine.

Belongs to the serine/threonine dehydratase family. DsdA subfamily. Pyridoxal 5'-phosphate serves as cofactor.

The enzyme catalyses D-serine = pyruvate + NH4(+). This chain is Probable D-serine dehydratase, found in Pseudomonas putida (strain GB-1).